We begin with the raw amino-acid sequence, 289 residues long: Rhodopsin (289 aa).

Topologically, residues 1–7 are extracellular; it reads YLVNPAA. A helical transmembrane segment spans residues 8–32; that stretch reads YAALGAYMFLLILIGFPINFLTLYV. Residues 33–44 lie on the Cytoplasmic side of the membrane; sequence TLEHKKLRTPLN. A helical transmembrane segment spans residues 45-67; that stretch reads YILLNLAVGNLFMVLGGFTTTMY. At 68–81 the chain is on the extracellular side; it reads TSMHGYFVLGRLGC. Cys-81 and Cys-158 are joined by a disulfide. Residues 82–104 traverse the membrane as a helical segment; the sequence is NLEGFFATLGGEIALWSLVVLAI. Residues 105 to 107 carry the 'Ionic lock' involved in activated form stabilization motif; that stretch reads ERW. Residues 105–123 lie on the Cytoplasmic side of the membrane; the sequence is ERWIVVCKPISKFRFTEDH. The chain crosses the membrane as a helical span at residues 124–144; the sequence is AIMGLAFSWVMGLACAVPPLV. Over 145-173 the chain is Extracellular; that stretch reads GWSRYIPEGMKCSCGVDYYTRAEGFNNES. An N-linked (GlcNAc...) asparagine glycan is attached at Asn-171. The helical transmembrane segment at 174-195 threads the bilayer; sequence FVIYMFIVHFLIPLSVIFFCYG. Over 196-223 the chain is Cytoplasmic; it reads RLLCAVKEAAAAQQESETTQRAEKEVSR. Residues 224-245 traverse the membrane as a helical segment; the sequence is MVVIMVIGFLVCWLPYASVAWW. Residues 246 to 257 lie on the Extracellular side of the membrane; sequence IFCNQGSDFGPI. Residues 258–279 traverse the membrane as a helical segment; it reads FMTLPSFFAKRPAIYNPMIYIC. At Lys-267 the chain carries N6-(retinylidene)lysine. At 280 to 289 the chain is on the cytoplasmic side; sequence MNKQFRHCMI.

Belongs to the G-protein coupled receptor 1 family. Opsin subfamily. Phosphorylated on some or all of the serine and threonine residues present in the C-terminal region. Post-translationally, contains one covalently linked retinal chromophore.

The protein resides in the membrane. It localises to the cell projection. It is found in the cilium. The protein localises to the photoreceptor outer segment. Photoreceptor required for image-forming vision at low light intensity. While most salt water fish species use retinal as chromophore, most freshwater fish use 3-dehydroretinal, or a mixture of retinal and 3-dehydroretinal. Light-induced isomerization of 11-cis to all-trans retinal triggers a conformational change that activates signaling via G-proteins. Subsequent receptor phosphorylation mediates displacement of the bound G-protein alpha subunit by arrestin and terminates signaling. In Cottinella boulengeri (Short-headed sculpin), this protein is Rhodopsin (rho).